The primary structure comprises 699 residues: MGNMRSLVKTLMVVLFLGWILVWIMISTNLFKSKWTPKLSKYLNTTYFGPQGTNLVLLTVPMMFIAVLSCVYLHIQKKPTQPQREWKLKRIMGRVIMVMNPLGIVTATELTFSLLFVALLAWSLYNYLYLSYHVHLHNDDNAKIWQAKFRAFGLRIGYVGNICWAFLFFPVTRASTILPLVGLTSESSIKYHIWLGHVSNFCFLVHTVVFLIYWAMINKLMETFAWNPTYVPNLAGTIAMVIGIAMWVTSLPSFRRKKFEIFFYTHHLYGLYIVFYVIHVGDSWFCMILPNIFLFFIDRYLRFLQSTKRSRLVSARILPSDNLELTFSKTPGLHYTPTSILFLHVPSISKIQWHPFTITSSSNLEKDTLSVVIRRQGSWTQKLYTHLSSSIDSLEVSTEGPYGPNSFDVSRHNSLILVSGGSGITPFISVIRELISQSQNKSTKLPDVLLVCSFKHYHDLAFLDLIFPLDMSASDISRLNLRIEAYITREDKKPETTDDHRLLQTKWFKPQPLDSPISPVLGPNNFLWLGVVILSSFVMFLLLIGIVTRYYIYPVDHNTGSIYNFSYRGLWDMFLGSACIFISSSVVFLWRKKQNKEGDKEFKNQVQSVEFQTPTSSPGSWFHGHERELESVPYQSIVQATSVHFGSKPNLKKILLEAEGSEDVGVMVCGPRKMRHEVAKICSSGLAKNLHFEAISFNW.

Topologically, residues 1-9 (MGNMRSLVK) are cytoplasmic. A helical membrane pass occupies residues 10 to 29 (TLMVVLFLGWILVWIMISTN). The Lumenal portion of the chain corresponds to 30 to 54 (LFKSKWTPKLSKYLNTTYFGPQGTN). A helical membrane pass occupies residues 55–73 (LVLLTVPMMFIAVLSCVYL). The Cytoplasmic segment spans residues 74-101 (HIQKKPTQPQREWKLKRIMGRVIMVMNP). Residues 102–125 (LGIVTATELTFSLLFVALLAWSLY) form a helical membrane-spanning segment. Residues 126–190 (NYLYLSYHVH…VGLTSESSIK (65 aa)) lie on the Lumenal side of the membrane. The 119-residue stretch at 157-275 (GYVGNICWAF…HHLYGLYIVF (119 aa)) folds into the Ferric oxidoreductase domain. The chain crosses the membrane as a helical span at residues 191-214 (YHIWLGHVSNFCFLVHTVVFLIYW). Positions 192 and 206 each coordinate heme. Residues 215–264 (AMINKLMETFAWNPTYVPNLAGTIAMVIGIAMWVTSLPSFRRKKFEIFFY) are Cytoplasmic-facing. The chain crosses the membrane as a helical span at residues 265 to 289 (THHLYGLYIVFYVIHVGDSWFCMIL). Positions 266 and 279 each coordinate heme. The Lumenal portion of the chain corresponds to 290–311 (PNIFLFFIDRYLRFLQSTKRSR). The 104-residue stretch at 305–408 (QSTKRSRLVS…EGPYGPNSFD (104 aa)) folds into the FAD-binding FR-type domain. Residues 312–332 (LVSARILPSDNLELTFSKTPG) traverse the membrane as a helical segment. Topologically, residues 333 to 525 (LHYTPTSILF…PISPVLGPNN (193 aa)) are cytoplasmic. 354–357 (HPFT) is an FAD binding site. 400 to 403 (GPYG) contacts NAD(+). The helical transmembrane segment at 526 to 548 (FLWLGVVILSSFVMFLLLIGIVT) threads the bilayer. Over 549–568 (RYYIYPVDHNTGSIYNFSYR) the chain is Lumenal. A helical membrane pass occupies residues 569–590 (GLWDMFLGSACIFISSSVVFLW). The Cytoplasmic segment spans residues 591 to 699 (RKKQNKEGDK…LHFEAISFNW (109 aa)).

This sequence belongs to the ferric reductase (FRE) family. Requires FAD as cofactor. In terms of tissue distribution, expressed in siliques. Detected at low levels in roots, cotyledon veins and shoots.

The protein resides in the membrane. It carries out the reaction 2 a Fe(II)-siderophore + NAD(+) + H(+) = 2 a Fe(III)-siderophore + NADH. Its function is as follows. Ferric chelate reductase. May participate in the transport of electrons to a Fe(3+) ion via FAD and heme intermediates. May function as root surface cupric chelate reductase and participate in the reduction of Cu(2+), for Cu(+) acquisition via Cu(+) transporters in response to copper deficiency. In Arabidopsis thaliana (Mouse-ear cress), this protein is Ferric reduction oxidase 4 (FRO4).